The primary structure comprises 428 residues: Serine--tRNA ligase (428 aa).

L-serine is bound at residue Thr-235–Glu-237. Position 266 to 268 (Arg-266 to Glu-268) interacts with ATP. Glu-289 is a binding site for L-serine. Glu-353–Ser-356 contributes to the ATP binding site. Ser-389 contributes to the L-serine binding site.

Belongs to the class-II aminoacyl-tRNA synthetase family. Type-1 seryl-tRNA synthetase subfamily. In terms of assembly, homodimer. The tRNA molecule binds across the dimer.

The protein resides in the cytoplasm. It catalyses the reaction tRNA(Ser) + L-serine + ATP = L-seryl-tRNA(Ser) + AMP + diphosphate + H(+). The enzyme catalyses tRNA(Sec) + L-serine + ATP = L-seryl-tRNA(Sec) + AMP + diphosphate + H(+). It participates in aminoacyl-tRNA biosynthesis; selenocysteinyl-tRNA(Sec) biosynthesis; L-seryl-tRNA(Sec) from L-serine and tRNA(Sec): step 1/1. Its function is as follows. Catalyzes the attachment of serine to tRNA(Ser). Is also able to aminoacylate tRNA(Sec) with serine, to form the misacylated tRNA L-seryl-tRNA(Sec), which will be further converted into selenocysteinyl-tRNA(Sec). This is Serine--tRNA ligase from Shewanella baltica (strain OS223).